Consider the following 430-residue polypeptide: Trigger factor (430 aa).

In terms of domain architecture, PPIase FKBP-type spans 157-242 (GDLVALETWS…AVEVSEPVLP (86 aa)).

This sequence belongs to the FKBP-type PPIase family. Tig subfamily.

It localises to the cytoplasm. The catalysed reaction is [protein]-peptidylproline (omega=180) = [protein]-peptidylproline (omega=0). Functionally, involved in protein export. Acts as a chaperone by maintaining the newly synthesized protein in an open conformation. Functions as a peptidyl-prolyl cis-trans isomerase. The polypeptide is Trigger factor (Xanthomonas campestris pv. campestris (strain B100)).